Reading from the N-terminus, the 738-residue chain is MEHIYQDAWIIPFIPLPIPIAIGLGLLLFPTTTKRIRRIWAFFSVLLLSIIMIFSVILSIKQIDGNPIYQYVWSWTINNDFSLDFGNFIDPLTSIMLILITTVGIMVLIYSDNYMSHDQGYLRFFAYMSFFNASMLGLVTSSNLIQIYIFWELVGMCSYLLIGFWFTRPLAANACQKAFVTNRVGDFSLFLGILGLYWITGSFEFRDFFEIAKNLIDNNGYNSFFLTLCTSLLFVGAVAKSAQFPLHVWLPDAMEGPTPISALIHAATMVAAGIFLVARLFPLFTVIPYIMNIIALVGIITLLLGATLALAQRDIKRSLAYSTMSQLGYIMLALGMGSYRAALFHLITHAYSKALLFLGSGSIIHSMENVVGYSPDKSQNMALMGGLTKYAPITKTSFLLGTLSLCGIPPLACFWSKDEILNDSWLYSPIFATIACLTAGLTAFYMFRMYLLTFEGHLNINCKNYSAKKNNGLYSISIWGKMGSKVIQNNYFVSTMNNYEKITLKAKQIDDNGISNMMRPFITINKIFDNTKTFTYPYESDNTMLFPLFVLVIFTFFIGYIGILPFDQGRIHFDILSKWLIPSINFLHSDFNNSFDWYEFLINALFSVSIAYFGIFIALFLYGPAYSYFHNFNLINFFIKRGPHRILWDKIINRVYNWSYNRGYIDIFYAKILIAGIRGLADFTYFFDKKVIEGIVNGIGVISFFVAESIKYVGGGRISSYLFFYLFYVAVFLVICLN.

A run of 17 helical transmembrane segments spans residues 9–29, 39–59, 89–109, 125–145, 147–167, 185–205, 224–244, 258–278, 280–300, 327–347, 396–416, 425–445, 544–564, 600–620, 667–687, 694–714, and 718–738; these read WIIPFIPLPIPIAIGLGLLLF, IWAFFSVLLLSIIMIFSVILS, IDPLTSIMLILITTVGIMVLI, FAYMSFFNASMLGLVTSSNLI, IYIFWELVGMCSYLLIGFWFT, GDFSLFLGILGLYWITGSFEF, FFLTLCTSLLFVGAVAKSAQF, TPISALIHAATMVAAGIFLVA, LFPLFTVIPYIMNIIALVGII, LGYIMLALGMGSYRAALFHLI, TSFLLGTLSLCGIPPLACFWS, WLYSPIFATIACLTAGLTAFY, MLFPLFVLVIFTFFIGYIGIL, FLINALFSVSIAYFGIFIALF, IFYAKILIAGIRGLADFTYFF, GIVNGIGVISFFVAESIKYVG, and ISSYLFFYLFYVAVFLVICLN.

Belongs to the complex I subunit 5 family. As to quaternary structure, NDH is composed of at least 16 different subunits, 5 of which are encoded in the nucleus.

It localises to the plastid. It is found in the chloroplast thylakoid membrane. The catalysed reaction is a plastoquinone + NADH + (n+1) H(+)(in) = a plastoquinol + NAD(+) + n H(+)(out). The enzyme catalyses a plastoquinone + NADPH + (n+1) H(+)(in) = a plastoquinol + NADP(+) + n H(+)(out). NDH shuttles electrons from NAD(P)H:plastoquinone, via FMN and iron-sulfur (Fe-S) centers, to quinones in the photosynthetic chain and possibly in a chloroplast respiratory chain. The immediate electron acceptor for the enzyme in this species is believed to be plastoquinone. Couples the redox reaction to proton translocation, and thus conserves the redox energy in a proton gradient. The polypeptide is NAD(P)H-quinone oxidoreductase subunit 5, chloroplastic (ndhF) (Ranunculus macranthus (Large buttercup)).